The following is a 119-amino-acid chain: Dolichyl-diphosphooligosaccharide--protein glycosyltransferase subunit DAD1 (119 aa).

An N-acetylserine modification is found at serine 2. Topologically, residues 2–30 are cytoplasmic; that stretch reads SASVASVISRFLEEYLSSTPQRLKLLDAY. A helical membrane pass occupies residues 31-51; that stretch reads LLYILLTGALQFGYCLLVGTF. Residues 52–54 are Lumenal-facing; it reads PFN. Residues 55–75 traverse the membrane as a helical segment; sequence SFLSGFISCVGSFILAGNGSL. Residues 76-81 lie on the Cytoplasmic side of the membrane; the sequence is RNRSNN. The helical transmembrane segment at 82-98 threads the bilayer; sequence VFTLVRCFSSLVTLFYS. Topologically, residues 99-119 are lumenal; the sequence is RSPPREVPRGACIALFCERGN.

It belongs to the DAD/OST2 family. As to quaternary structure, component of the oligosaccharyltransferase (OST) complex. OST exists in two different complex forms which contain common core subunits RPN1, RPN2, OST48, OST4, DAD1 and TMEM258, either STT3A or STT3B as catalytic subunits, and form-specific accessory subunits. STT3A complex assembly occurs through the formation of 3 subcomplexes. Subcomplex 1 contains RPN1 and TMEM258, subcomplex 2 contains the STT3A-specific subunits STT3A, DC2/OSTC, and KCP2 as well as the core subunit OST4, and subcomplex 3 contains RPN2, DAD1, and OST48. The STT3A complex can form stable complexes with the Sec61 complex or with both the Sec61 and TRAP complexes.

The protein resides in the endoplasmic reticulum membrane. It functions in the pathway protein modification; protein glycosylation. Functionally, subunit of the oligosaccharyl transferase (OST) complex that catalyzes the initial transfer of a defined glycan (Glc(3)Man(9)GlcNAc(2) in eukaryotes) from the lipid carrier dolichol-pyrophosphate to an asparagine residue within an Asn-X-Ser/Thr consensus motif in nascent polypeptide chains, the first step in protein N-glycosylation. N-glycosylation occurs cotranslationally and the complex associates with the Sec61 complex at the channel-forming translocon complex that mediates protein translocation across the endoplasmic reticulum (ER). All subunits are required for a maximal enzyme activity. This Canis lupus familiaris (Dog) protein is Dolichyl-diphosphooligosaccharide--protein glycosyltransferase subunit DAD1.